Here is a 205-residue protein sequence, read N- to C-terminus: Glycerol-3-phosphate acyltransferase (205 aa).

The next 5 helical transmembrane spans lie at V3–L23, G53–A73, P80–F100, L112–L132, and G138–F158.

It belongs to the PlsY family. In terms of assembly, probably interacts with PlsX.

The protein resides in the cell inner membrane. The enzyme catalyses an acyl phosphate + sn-glycerol 3-phosphate = a 1-acyl-sn-glycero-3-phosphate + phosphate. It functions in the pathway lipid metabolism; phospholipid metabolism. In terms of biological role, catalyzes the transfer of an acyl group from acyl-phosphate (acyl-PO(4)) to glycerol-3-phosphate (G3P) to form lysophosphatidic acid (LPA). This enzyme utilizes acyl-phosphate as fatty acyl donor, but not acyl-CoA or acyl-ACP. The protein is Glycerol-3-phosphate acyltransferase of Erwinia tasmaniensis (strain DSM 17950 / CFBP 7177 / CIP 109463 / NCPPB 4357 / Et1/99).